The primary structure comprises 249 residues: 2,3-bisphosphoglycerate-dependent phosphoglycerate mutase (249 aa).

Substrate is bound by residues 8 to 15 (RHGESVWN), 21 to 22 (TG), Arg-60, 87 to 90 (ERHY), Lys-98, 114 to 115 (RR), and 183 to 184 (GN). The active-site Tele-phosphohistidine intermediate is the His-9. The active-site Proton donor/acceptor is the Glu-87.

This sequence belongs to the phosphoglycerate mutase family. BPG-dependent PGAM subfamily.

It carries out the reaction (2R)-2-phosphoglycerate = (2R)-3-phosphoglycerate. Its pathway is carbohydrate degradation; glycolysis; pyruvate from D-glyceraldehyde 3-phosphate: step 3/5. Its function is as follows. Catalyzes the interconversion of 2-phosphoglycerate and 3-phosphoglycerate. The polypeptide is 2,3-bisphosphoglycerate-dependent phosphoglycerate mutase (Chloroherpeton thalassium (strain ATCC 35110 / GB-78)).